Reading from the N-terminus, the 247-residue chain is Adenosylcobinamide-GDP ribazoletransferase (247 aa).

The next 5 membrane-spanning stretches (helical) occupy residues 34 to 54, 59 to 79, 113 to 133, 138 to 158, and 194 to 214; these read IITF…VFMV, CGVP…TGGF, GGLA…ELAL, ILAS…LLMY, and VLLP…AIFI.

This sequence belongs to the CobS family. Mg(2+) serves as cofactor.

The protein resides in the cell inner membrane. The catalysed reaction is alpha-ribazole + adenosylcob(III)inamide-GDP = adenosylcob(III)alamin + GMP + H(+). The enzyme catalyses alpha-ribazole 5'-phosphate + adenosylcob(III)inamide-GDP = adenosylcob(III)alamin 5'-phosphate + GMP + H(+). The protein operates within cofactor biosynthesis; adenosylcobalamin biosynthesis; adenosylcobalamin from cob(II)yrinate a,c-diamide: step 7/7. In terms of biological role, joins adenosylcobinamide-GDP and alpha-ribazole to generate adenosylcobalamin (Ado-cobalamin). Also synthesizes adenosylcobalamin 5'-phosphate from adenosylcobinamide-GDP and alpha-ribazole 5'-phosphate. The sequence is that of Adenosylcobinamide-GDP ribazoletransferase from Escherichia coli O7:K1 (strain IAI39 / ExPEC).